Consider the following 561-residue polypeptide: Phosphatidylinositol 4-kinase gamma 1 (561 aa).

The 296-residue stretch at 121–416 (GAQPLLLPSG…SVFGKTSEDS (296 aa)) folds into the PI3K/PI4K catalytic domain. Residues 127 to 133 (LPSGMGG) are G-loop. ATP contacts are provided by residues 128–134 (PSGMGGA), K149, and 233–236 (QRFV). Residues 266–274 (LNLDRHAGN) form a catalytic loop region. An activation loop region spans residues 296–322 (PIDHGLCLPECLDDPYFEWLNWPQALV). Residue D298 participates in ATP binding. A disordered region spans residues 456–520 (PPLVPRGPRA…PISPNHDESK (65 aa)). The span at 467-484 (TIPNDVTASMSSSQNQRI) shows a compositional bias: polar residues.

Belongs to the PI3/PI4-kinase family. Type II PI4K subfamily.

It catalyses the reaction a 1,2-diacyl-sn-glycero-3-phospho-(1D-myo-inositol) + ATP = a 1,2-diacyl-sn-glycero-3-phospho-(1D-myo-inositol 4-phosphate) + ADP + H(+). The phosphorylation of phosphatidylinositol (PI) to PI4P is the first committed step in the generation of phosphatidylinositol 4,5-bisphosphate (PIP2), a precursor of the second messenger inositol 1,4,5-trisphosphate (InsP3). This chain is Phosphatidylinositol 4-kinase gamma 1 (PI4KG1), found in Arabidopsis thaliana (Mouse-ear cress).